The chain runs to 389 residues: Phosphopentomutase (389 aa).

Residues Asp-12, Asp-284, His-289, Asp-325, His-326, and His-337 each coordinate Mn(2+).

It belongs to the phosphopentomutase family. Mn(2+) serves as cofactor.

It is found in the cytoplasm. The catalysed reaction is 2-deoxy-alpha-D-ribose 1-phosphate = 2-deoxy-D-ribose 5-phosphate. It catalyses the reaction alpha-D-ribose 1-phosphate = D-ribose 5-phosphate. It functions in the pathway carbohydrate degradation; 2-deoxy-D-ribose 1-phosphate degradation; D-glyceraldehyde 3-phosphate and acetaldehyde from 2-deoxy-alpha-D-ribose 1-phosphate: step 1/2. In terms of biological role, isomerase that catalyzes the conversion of deoxy-ribose 1-phosphate (dRib-1-P) and ribose 1-phosphate (Rib-1-P) to deoxy-ribose 5-phosphate (dRib-5-P) and ribose 5-phosphate (Rib-5-P), respectively. This Anaeromyxobacter sp. (strain Fw109-5) protein is Phosphopentomutase.